Here is a 440-residue protein sequence, read N- to C-terminus: Glutamate--tRNA ligase 1 (440 aa).

The short motif at 7 to 17 (PSPTGYLHVGN) is the 'HIGH' region element. The short motif at 238 to 242 (KISKR) is the 'KMSKS' region element. K241 contacts ATP.

The protein belongs to the class-I aminoacyl-tRNA synthetase family. Glutamate--tRNA ligase type 1 subfamily. As to quaternary structure, monomer.

The protein resides in the cytoplasm. It catalyses the reaction tRNA(Glu) + L-glutamate + ATP = L-glutamyl-tRNA(Glu) + AMP + diphosphate. Catalyzes the attachment of glutamate to tRNA(Glu) in a two-step reaction: glutamate is first activated by ATP to form Glu-AMP and then transferred to the acceptor end of tRNA(Glu). This is Glutamate--tRNA ligase 1 from Wolbachia sp. subsp. Brugia malayi (strain TRS).